Here is a 372-residue protein sequence, read N- to C-terminus: Putative glutamate--cysteine ligase 2 (372 aa).

The protein belongs to the glutamate--cysteine ligase type 2 family. YbdK subfamily. Homodimer.

It carries out the reaction L-cysteine + L-glutamate + ATP = gamma-L-glutamyl-L-cysteine + ADP + phosphate + H(+). ATP-dependent carboxylate-amine ligase which exhibits weak glutamate--cysteine ligase activity. The chain is Putative glutamate--cysteine ligase 2 (ybdK) from Escherichia coli O1:K1 / APEC.